We begin with the raw amino-acid sequence, 62 residues long: Metallothionein-4 (62 aa).

Residues Cys-6, Cys-8, Cys-14, Cys-16, Cys-20, Cys-22, Cys-25, Cys-27, Cys-30, Cys-34, Cys-35, Cys-37, Cys-38, Cys-42, Cys-45, Cys-49, Cys-51, Cys-58, Cys-60, and Cys-61 each contribute to the a divalent metal cation site.

This sequence belongs to the metallothionein superfamily. Type 1 family. As to expression, expressed exclusively in stratified squamous epithelia associated with oral epithelia, esophagus, upper stomach, tail, footpads and neonatal skin.

Functionally, seems to bind zinc and copper. Could play a special role in regulating zinc metabolism during the differentiation of stratified epithelia. This is Metallothionein-4 (Mt4) from Mus musculus (Mouse).